The primary structure comprises 312 residues: Erlin (312 aa).

Residues 1-3 (MLT) are Cytoplasmic-facing. The chain crosses the membrane as a helical span at residues 4-24 (ELALGLFALWIAIFSQALHKI). The Lumenal segment spans residues 25 to 312 (EEGHVGVYYR…FVMGTTQQTV (288 aa)). Asparagine 104 is a glycosylation site (N-linked (GlcNAc...) asparagine).

It belongs to the band 7/mec-2 family. In terms of assembly, seems to form a multimeric complex. Expressed in the germline only.

Its subcellular location is the endoplasmic reticulum membrane. This Caenorhabditis elegans protein is Erlin.